Here is a 324-residue protein sequence, read N- to C-terminus: Probable UDP-sugar transporter protein SLC35A4 (324 aa).

The Cytoplasmic portion of the chain corresponds to 1–18 (MSVEDGGMPGLSRPRQAR). The helical transmembrane segment at 19–39 (WTLMLLLSTAMYGAHAPLLAL) threads the bilayer. The Lumenal segment spans residues 40 to 52 (CHVDGRVPFRPSS). The helical transmembrane segment at 53-73 (AVLLTELTKLLLCAFSLLVGW) threads the bilayer. Over 74 to 85 (QAWPQGAPPWRQ) the chain is Cytoplasmic. Residues 86-106 (AAPFALSALLYGANNNLVIYL) form a helical membrane-spanning segment. Topologically, residues 107 to 142 (QRYMDPSTYQVLSNLKIGSTAVLYCLCLRHRLSVRQ) are lumenal. Residues 143–163 (GLALLLLMAAGACYAAGGLQV) form a helical membrane-spanning segment. Residues 164 to 180 (PGNTLPRPPPAAAASPM) lie on the Cytoplasmic side of the membrane. The chain crosses the membrane as a helical span at residues 181–201 (PLHITPLGLLLLILYCLISGL). Residues 202-214 (SSVYTELLMKRQQ) are Lumenal-facing. A helical membrane pass occupies residues 215–235 (LPLALQNLFLYTFGVLLNLGL). At 236-250 (HAGGGPGPGLLEGFS) the chain is on the cytoplasmic side. A helical transmembrane segment spans residues 251–271 (GWAALVVLSQALNGLLMSVVM). Residues 272-275 (KHGS) lie on the Lumenal side of the membrane. Residues 276 to 298 (SITRLFVVSCSLVVNAVLSAVLL) form a helical membrane-spanning segment. Residues 299–324 (RLQLTAAFFLATLLIGLAMRLYYGSR) are Cytoplasmic-facing.

This sequence belongs to the nucleotide-sugar transporter family. SLC35A subfamily. As to quaternary structure, found in a complex with SLC35A2 and SLC35A3.

Its subcellular location is the golgi apparatus membrane. The catalysed reaction is CDP-L-ribitol(in) + CDP(out) = CDP-L-ribitol(out) + CDP(in). Mediates the transport of CDP-ribitol. Does not exhibit CMP-sialic acid, UDP-galactose and UDP-N-acetylglucosamine transport activity. The polypeptide is Probable UDP-sugar transporter protein SLC35A4 (Pongo abelii (Sumatran orangutan)).